The sequence spans 439 residues: 3beta-hydroxysteroid-dehydrogenase/decarboxylase isoform 1 (439 aa).

16–21 is a binding site for NAD(+); it reads GGRGFA. 2 N-linked (GlcNAc...) asparagine glycosylation sites follow: Asn75 and Asn158. Residues Tyr161 and Lys165 each contribute to the NAD(+) site. The active-site Proton donor is Lys165. An N-linked (GlcNAc...) asparagine glycan is attached at Asn327. The 69-residue stretch at 371-439 folds into the Reticulon; atypical domain; that stretch reads VTETIQWKKQ…MKVFGSKKID (69 aa). 2 helical membrane-spanning segments follow: residues 381–401 and 405–425; these read TLIAIVILITLYHNFVATTGS and IITAVSKVLLVSSIFMFINGI.

Belongs to the 3-beta-HSD family.

Its subcellular location is the endoplasmic reticulum membrane. It catalyses the reaction a 3beta-hydroxysteroid-4alpha-carboxylate + NAD(+) = a 3-oxosteroid + CO2 + NADH. It carries out the reaction 4alpha-carboxy-4beta,14alpha-dimethyl-9beta,19-cyclo-5alpha-ergost-24(24(1))-en-3beta-ol + NAD(+) = cycloeucalenone + CO2 + NADH. The protein operates within steroid biosynthesis; zymosterol biosynthesis; zymosterol from lanosterol: step 4/6. Functionally, 3beta-hydroxysteroid-dehydrogenase/decarboxylase involved in sterol synthesis. Catalyzes the formation of 3-oxosteroids from 3beta-hydroxysteroids-4alpha-carboxylate. Involved in the regulation of inflorescence internodes and leaves growth, probably by affecting auxin transporter activity possibly by altering sterol composition in the membranes. This chain is 3beta-hydroxysteroid-dehydrogenase/decarboxylase isoform 1, found in Arabidopsis thaliana (Mouse-ear cress).